A 130-amino-acid chain; its full sequence is Small ribosomal subunit protein uS11 (130 aa).

This sequence belongs to the universal ribosomal protein uS11 family. In terms of assembly, part of the 30S ribosomal subunit. Interacts with proteins S7 and S18. Binds to IF-3.

In terms of biological role, located on the platform of the 30S subunit, it bridges several disparate RNA helices of the 16S rRNA. Forms part of the Shine-Dalgarno cleft in the 70S ribosome. The sequence is that of Small ribosomal subunit protein uS11 from Bdellovibrio bacteriovorus (strain ATCC 15356 / DSM 50701 / NCIMB 9529 / HD100).